Here is an 808-residue protein sequence, read N- to C-terminus: Probable inorganic carbon transporter subunit DabA (808 aa).

Cys334, Asp336, His494, and Cys509 together coordinate Zn(2+).

This sequence belongs to the inorganic carbon transporter (TC 9.A.2) DabA family. As to quaternary structure, forms a complex with DabB. It depends on Zn(2+) as a cofactor.

The protein resides in the cell inner membrane. Functionally, part of an energy-coupled inorganic carbon pump. The polypeptide is Probable inorganic carbon transporter subunit DabA (Rhodopseudomonas palustris (strain BisB5)).